The sequence spans 142 residues: Hemoglobin subunit alpha (142 aa).

The Globin domain maps to 2–142 (VLSPADKTNV…VSTVLTSKYR (141 aa)). Position 4 is a phosphoserine (S4). Residue K8 is modified to N6-succinyllysine. T9 is subject to Phosphothreonine. K12 carries the post-translational modification N6-succinyllysine. K17 is subject to N6-acetyllysine; alternate. K17 is subject to N6-succinyllysine; alternate. Y25 carries the post-translational modification Phosphotyrosine. A Phosphoserine modification is found at S36. At K41 the chain carries N6-succinyllysine. The residue at position 50 (S50) is a Phosphoserine. H59 contributes to the O2 binding site. Position 88 (H88) interacts with heme b. Residue S103 is modified to Phosphoserine. A Phosphothreonine modification is found at T109. S125 carries the phosphoserine modification. T135 and T138 each carry phosphothreonine. S139 carries the phosphoserine modification.

The protein belongs to the globin family. In terms of assembly, heterotetramer of two alpha chains and two beta chains. As to expression, red blood cells.

Its function is as follows. Involved in oxygen transport from the lung to the various peripheral tissues. In terms of biological role, hemopressin acts as an antagonist peptide of the cannabinoid receptor CNR1. Hemopressin-binding efficiently blocks cannabinoid receptor CNR1 and subsequent signaling. The chain is Hemoglobin subunit alpha (HBA) from Ailuropoda melanoleuca (Giant panda).